Reading from the N-terminus, the 476-residue chain is Chromosomal replication initiator protein DnaA (476 aa).

Positions 1–87 are domain I, interacts with DnaA modulators; it reads MSDRSDPTHA…AGVSNFAIVV (87 aa). The tract at residues 87 to 131 is domain II; it reads VNPGIAQDAFAQHPEPAEQPYIETPTITAPTDNPGLPASPSRGDS. Residues 132-348 form a domain III, AAA+ region region; the sequence is RLNPKYGFDT…GTLIRVTAFA (217 aa). ATP is bound by residues Gly-176, Gly-178, Lys-179, and Thr-180. The segment at 349–476 is domain IV, binds dsDNA; the sequence is SLNKTPVDLA…IKQNHRYGKM (128 aa).

The protein belongs to the DnaA family. Oligomerizes as a right-handed, spiral filament on DNA at oriC.

It is found in the cytoplasm. Its function is as follows. Plays an essential role in the initiation and regulation of chromosomal replication. ATP-DnaA binds to the origin of replication (oriC) to initiate formation of the DNA replication initiation complex once per cell cycle. Binds the DnaA box (a 9 base pair repeat at the origin) and separates the double-stranded (ds)DNA. Forms a right-handed helical filament on oriC DNA; dsDNA binds to the exterior of the filament while single-stranded (ss)DNA is stabiized in the filament's interior. The ATP-DnaA-oriC complex binds and stabilizes one strand of the AT-rich DNA unwinding element (DUE), permitting loading of DNA polymerase. After initiation quickly degrades to an ADP-DnaA complex that is not apt for DNA replication. Binds acidic phospholipids. This is Chromosomal replication initiator protein DnaA from Clavibacter sepedonicus (Clavibacter michiganensis subsp. sepedonicus).